The sequence spans 411 residues: Acetylornithine aminotransferase (411 aa).

Pyridoxal 5'-phosphate-binding positions include 107 to 108 and Phe141; that span reads GT. Arg144 contributes to the N(2)-acetyl-L-ornithine binding site. 227–230 is a binding site for pyridoxal 5'-phosphate; sequence DEIQ. Residue Lys256 is modified to N6-(pyridoxal phosphate)lysine. Thr284 provides a ligand contact to N(2)-acetyl-L-ornithine. Thr285 contributes to the pyridoxal 5'-phosphate binding site.

It belongs to the class-III pyridoxal-phosphate-dependent aminotransferase family. ArgD subfamily. Homodimer. The cofactor is pyridoxal 5'-phosphate.

Its subcellular location is the cytoplasm. The enzyme catalyses N(2)-acetyl-L-ornithine + 2-oxoglutarate = N-acetyl-L-glutamate 5-semialdehyde + L-glutamate. The protein operates within amino-acid biosynthesis; L-arginine biosynthesis; N(2)-acetyl-L-ornithine from L-glutamate: step 4/4. The protein is Acetylornithine aminotransferase of Xylella fastidiosa (strain Temecula1 / ATCC 700964).